The following is a 184-amino-acid chain: GTP-binding protein Rheb (184 aa).

K8 is covalently cross-linked (Glycyl lysine isopeptide (Lys-Gly) (interchain with G-Cter in ubiquitin)). GDP is bound by residues S16, V17, G18, K19, S20, S21, V32, and D33. Residue S16 participates in GTP binding. GTP contacts are provided by G18, K19, S20, S21, and V32. Residue S20 participates in Mg(2+) binding. GTP contacts are provided by Y35, T38, N119, and D122. Positions 35 to 43 (YDPTIENTF) match the Effector region motif. T38 is a binding site for Mg(2+). GDP-binding residues include N119 and D122. Position 130 is a phosphoserine; by MAPKAPK5 (S130). A150 is a GDP binding site. A150 serves as a coordination point for GTP. C181 is modified (cysteine methyl ester). C181 carries the S-farnesyl cysteine lipid modification. Residues 182–184 (SVM) constitute a propeptide, removed in mature form.

It belongs to the small GTPase superfamily. Rheb family. As to quaternary structure, associates with the mTORC1 complex (MTOR, MLST8 and RPTOR) in a guanyl nucleotide-independent manner. Interacts with TSC2. Interacts with MCRS1; the interaction maintains RHEB at the lysosome in its active GTP-bound form and prevents its interaction with the mTORC1 complex inhibitor TSC2, ensuring activation of the mTORC1 complex by RHEB. Interacts (when prenylated) with PDE6D; this promotes release from membranes. In terms of processing, farnesylation is important for efficiently activating mTORC1-mediated signaling. Post-translationally, polyubiquitinated in response to amino acid, promoting its interaction with MTOR and mTORC1 activation. Deubiquitination by ATXN3 promotes recruitment of the TSC-TBC complex and RHEB inactivation by TSC2. Monoubiquitinated at Lys-8 by RNF152, promoting its association with the TSC-TBC complex. Deubiquitinated at Lys-8 by USP4, promoting mTORC1 activation. Phosphorylation by MAPKAPK5 impairs GTP-binding and inactivation. Ubiquitous. Highest levels observed in skeletal and cardiac muscle.

The protein resides in the endomembrane system. It is found in the lysosome membrane. The protein localises to the golgi apparatus membrane. It localises to the endoplasmic reticulum membrane. Its subcellular location is the cytoplasm. The protein resides in the cytosol. The enzyme catalyses GTP + H2O = GDP + phosphate + H(+). With respect to regulation, alternates between an inactive form bound to GDP and an active form bound to GTP. Inactivated by the TSC-TBC complex via the GTPase activating protein (GAP) domain of TSC2. Autoinhibited by Tyr-35, which constrains the active site conformation, restricting the access of the catalytic Asp-65 to the nucleotide-binding pocket. Specifically inhibited by NR1 (4-bromo-6-(3,4-dichlorophenylthio)-1-(4-(dimethylcarbamoyl)benzyl)-1H-indole-2-carboxylic acid). Its function is as follows. Small GTPase that acts as an allosteric activator of the canonical mTORC1 complex, an evolutionarily conserved central nutrient sensor that stimulates anabolic reactions and macromolecule biosynthesis to promote cellular biomass generation and growth. In response to nutrients, growth factors or amino acids, specifically activates the protein kinase activity of MTOR, the catalytic component of the mTORC1 complex: acts by causing a conformational change that allows the alignment of residues in the active site of MTOR, thereby enhancing the phosphorylation of ribosomal protein S6 kinase (RPS6KB1 and RPS6KB2) and EIF4EBP1 (4E-BP1). RHEB is also required for localization of the TSC-TBC complex to lysosomal membranes. In response to starvation, RHEB is inactivated by the TSC-TBC complex, preventing activation of mTORC1. Has low intrinsic GTPase activity. The protein is GTP-binding protein Rheb of Homo sapiens (Human).